The primary structure comprises 284 residues: MVLMIVSGRSGSGKSVALRALEDMGFYCVDNLPVVLLPDLARTLADRQISAAVSIDVRNMPESPEIFEQAMNNLPDAFSPQLLFLDADRNTLIRRYSDTRRLHPLSSKNLSLESAIDKESDLLEPLRSRADLIVDTSEMSVHELAEMLRTRLLGKRERELTMVFESFGFKHGIPIDADYVFDVRFLPNPHWDPKLRPMTGLDKPVAAFLDRHTEVHNFIYQTRSYLELWLPMLETNNRSYLTVAIGCTGGKHRSVYIAEQLADYFRSRGKNVQSRHRTLEKRKT.

Position 8–15 (glycine 8–serine 15) interacts with ATP. GTP is bound at residue aspartate 56 to asparagine 59. Residues arginine 266 to threonine 284 are RNA-binding.

It belongs to the RapZ-like family. RapZ subfamily. As to quaternary structure, homotrimer.

Functionally, modulates the synthesis of GlmS, by affecting the processing and stability of the regulatory small RNA GlmZ. When glucosamine-6-phosphate (GlcN6P) concentrations are high in the cell, RapZ binds GlmZ and targets it to cleavage by RNase E. Consequently, GlmZ is inactivated and unable to activate GlmS synthesis. Under low GlcN6P concentrations, RapZ is sequestered and inactivated by an other regulatory small RNA, GlmY, preventing GlmZ degradation and leading to synthesis of GlmS. This chain is RNase adapter protein RapZ, found in Salmonella arizonae (strain ATCC BAA-731 / CDC346-86 / RSK2980).